Reading from the N-terminus, the 297-residue chain is Superoxide dismutase 1 copper chaperone (297 aa).

Cysteine 11 provides a ligand contact to Cu cation. Residues 222–263 (GSSCCSKKDSSPSEKPSCCSQEKKSCCSSKKPSCCSQEKKGC) are disordered. The segment covering 234–257 (SEKPSCCSQEKKSCCSSKKPSCCS) has biased composition (low complexity).

It belongs to the CCS1 family.

The protein resides in the cytoplasm. Functionally, copper chaperone for superoxide dismutase 1 (sod1). Binds copper ions and delivers them specifically to sod1. Also has a role in cell protection against copper ion toxicity during conditions of copper excess. The C-terminal region is thought to act specifically in this sequestration role. This chain is Superoxide dismutase 1 copper chaperone (ccs1), found in Schizosaccharomyces pombe (strain 972 / ATCC 24843) (Fission yeast).